The following is a 388-amino-acid chain: Trichodiene synthase (388 aa).

The Mg(2+) site is built by Asp109, Glu173, Asn234, Ser238, Glu242, and Asp248. An aspartate-rich domain region spans residues 109–113; that stretch reads DDSRE.

It belongs to the trichodiene synthase family. The cofactor is Mg(2+). Mn(2+) is required as a cofactor.

The enzyme catalyses (2E,6E)-farnesyl diphosphate = trichodiene + diphosphate. The protein operates within sesquiterpene biosynthesis; trichothecene biosynthesis. In terms of biological role, trichodiene synthase; part of the gene cluster that mediates the production of the antimicrobial trichothecene harzianum A (HA) that plays a role in Botrytis cinerea antagonistic activity and plant defense priming. The biosynthesis of harzianum A begins with the cyclization of farnesyl diphosphate to trichodiene and is catalyzed by the trichodiene synthase TRI5. Trichodiene undergoes a series of oxygenations catalyzed by the cytochrome P450 monooxygenase TRI4. TRI4 controls the addition of 3 oxygens at C-2, C-11, and the C-12, C-13-epoxide to form the intermediate isotrichodiol. Isotrichodiol then undergoes a non-enzymatic isomerization and cyclization to form 12,13-epoxytrichothec-9-ene (EPT) which is further converted to trichodermol by the cytochrome P450 monooxygenase TRI11 via C-4 hydroxylation. The last step of HA synthesis is esterification of an octatriendioyl moiety to the C-4 oxygen of trichodermol. The octatriendioyl moiety is probably produced by the polyketide synthase TRI17 and the esterification performed by the trichothecene O-acetyltransferase TRI3. The sequence is that of Trichodiene synthase from Trichoderma arundinaceum.